A 156-amino-acid polypeptide reads, in one-letter code: Ribosome maturation factor RimP (156 aa).

This sequence belongs to the RimP family.

The protein localises to the cytoplasm. Functionally, required for maturation of 30S ribosomal subunits. The polypeptide is Ribosome maturation factor RimP (Bacillus mycoides (strain KBAB4) (Bacillus weihenstephanensis)).